We begin with the raw amino-acid sequence, 473 residues long: ATP synthase subunit beta (473 aa).

153–160 (GGAGVGKT) serves as a coordination point for ATP.

It belongs to the ATPase alpha/beta chains family. F-type ATPases have 2 components, CF(1) - the catalytic core - and CF(0) - the membrane proton channel. CF(1) has five subunits: alpha(3), beta(3), gamma(1), delta(1), epsilon(1). CF(0) has three main subunits: a(1), b(2) and c(9-12). The alpha and beta chains form an alternating ring which encloses part of the gamma chain. CF(1) is attached to CF(0) by a central stalk formed by the gamma and epsilon chains, while a peripheral stalk is formed by the delta and b chains.

The protein localises to the cell inner membrane. The enzyme catalyses ATP + H2O + 4 H(+)(in) = ADP + phosphate + 5 H(+)(out). In terms of biological role, produces ATP from ADP in the presence of a proton gradient across the membrane. The catalytic sites are hosted primarily by the beta subunits. The polypeptide is ATP synthase subunit beta (Rickettsia bellii (strain OSU 85-389)).